A 131-amino-acid chain; its full sequence is Small ribosomal subunit protein uS8 (131 aa).

This sequence belongs to the universal ribosomal protein uS8 family. As to quaternary structure, part of the 30S ribosomal subunit. Contacts proteins S5 and S12.

Its function is as follows. One of the primary rRNA binding proteins, it binds directly to 16S rRNA central domain where it helps coordinate assembly of the platform of the 30S subunit. In Verminephrobacter eiseniae (strain EF01-2), this protein is Small ribosomal subunit protein uS8.